A 1099-amino-acid chain; its full sequence is Protein transport protein Sec24A (1099 aa).

Disordered regions lie at residues 1-36 (MSQP…GPVQ), 65-139 (KTLN…LPGA), and 279-317 (SQPT…AGLP). Polar residues-rich tracts occupy residues 10–20 (GGSSTGLQAQN), 68–90 (NPVS…NYQG), 108–126 (SLHS…QNPA), 279–292 (SQPT…SRSV), and 303–317 (YQNT…AGLP). Residues cysteine 437, cysteine 440, cysteine 458, and cysteine 461 each coordinate Zn(2+). The interval 437–461 (CRSCRTYINPFVSFLDQRRWKCNLC) is zinc finger-like. The Gelsolin-like repeat unit spans residues 972-1044 (PQPPILQLSV…TPESARTIAF (73 aa)).

Belongs to the SEC23/SEC24 family. SEC24 subfamily. In terms of assembly, COPII is composed of at least five proteins: the Sec23/24 complex, the Sec13/31 complex and Sar1. Interacts with TMED2. Interacts (as part of the Sec23/24 complex) with SEC22B; recruits SEC22B into COPII-coated vesicles for its transport from the endoplasmic reticulum to the Golgi. Interacts with STING1; promoting STING1 translocation to COPII vesicles in a STEEP1-dependent manner. Interacts with TMEM39A. Interacts with SACM1L; this interaction is reduced in the absence of TMEM39A. Interacts with kinase FAM20C; transport of FAM20C from the endoplasmic reticulum to the Golgi is likely to be mediated by COPII vesicles.

Its subcellular location is the cytoplasmic vesicle. It localises to the COPII-coated vesicle membrane. It is found in the endoplasmic reticulum membrane. The protein localises to the cytoplasm. The protein resides in the cytosol. Its function is as follows. Component of the coat protein complex II (COPII) which promotes the formation of transport vesicles from the endoplasmic reticulum (ER). The coat has two main functions, the physical deformation of the endoplasmic reticulum membrane into vesicles and the selection of cargo molecules for their transport to the Golgi complex. Plays a central role in cargo selection within the COPII complex and together with SEC24B may have a different specificity compared to SEC24C and SEC24D. May package preferentially cargos with cytoplasmic DxE or LxxLE motifs and may also recognize conformational epitopes. This is Protein transport protein Sec24A from Bos taurus (Bovine).